The sequence spans 345 residues: NADH-quinone oxidoreductase subunit H (345 aa).

The next 8 membrane-spanning stretches (helical) occupy residues 13 to 33 (VLII…LLFL), 84 to 104 (FMLA…VIPF), 115 to 135 (VAIL…IMGG), 161 to 181 (IGLI…SAIV), 190 to 210 (FFSW…ISAL), 248 to 268 (YIAI…GWLS), 278 to 298 (IWMV…KAIV), and 309 to 329 (LGWK…AFAA).

It belongs to the complex I subunit 1 family. As to quaternary structure, NDH-1 is composed of 14 different subunits. Subunits NuoA, H, J, K, L, M, N constitute the membrane sector of the complex.

The protein resides in the cell inner membrane. It carries out the reaction a quinone + NADH + 5 H(+)(in) = a quinol + NAD(+) + 4 H(+)(out). NDH-1 shuttles electrons from NADH, via FMN and iron-sulfur (Fe-S) centers, to quinones in the respiratory chain. The immediate electron acceptor for the enzyme in this species is believed to be ubiquinone. Couples the redox reaction to proton translocation (for every two electrons transferred, four hydrogen ions are translocated across the cytoplasmic membrane), and thus conserves the redox energy in a proton gradient. This subunit may bind ubiquinone. The chain is NADH-quinone oxidoreductase subunit H from Dinoroseobacter shibae (strain DSM 16493 / NCIMB 14021 / DFL 12).